The chain runs to 215 residues: Proapoptotic nucleolar protein 1 (215 aa).

The segment at 35–215 (RKGTPTARCL…RLPAPRSAST (181 aa)) is disordered. Residues 169-180 (PRPPQHLSPPQP) are compositionally biased toward pro residues. The necessary for nucleolar localization stretch occupies residues 185 to 215 (MGAAEGSRRADTHHARRRRRARLPAPRSAST).

As to expression, widely expressed.

It is found in the nucleus. It localises to the nucleolus. Apoptosis-inducing protein that modulates the tumor suppressor function of CDKN2A/p14ARF. Enhances the stability of CDKN2A/p14ARF protein by protecting it from degradation. May act as a tumor suppressor. The sequence is that of Proapoptotic nucleolar protein 1 from Homo sapiens (Human).